Reading from the N-terminus, the 205-residue chain is Coenzyme Q-binding protein COQ10, mitochondrial (205 aa).

Belongs to the COQ10 family. As to quaternary structure, interacts with coenzyme Q.

It is found in the mitochondrion inner membrane. In terms of biological role, required for the function of coenzyme Q in the respiratory chain. May serve as a chaperone or may be involved in the transport of Q6 from its site of synthesis to the catalytic sites of the respiratory complexes. The sequence is that of Coenzyme Q-binding protein COQ10, mitochondrial (coq10-1) from Dictyostelium discoideum (Social amoeba).